The primary structure comprises 24 residues: MNVSQIYARNGELFSGRICKQKRQ.

The sequence is that of Protein YsdE from Escherichia coli (strain K12).